The sequence spans 249 residues: Bacillaene synthase decarboxylase PksI (249 aa).

Residue H230 is part of the active site.

It belongs to the enoyl-CoA hydratase/isomerase family. As to quaternary structure, homotrimer. Does not form a heterotrimeric complex with PksH.

The protein localises to the cytoplasm. It participates in antibiotic biosynthesis; bacillaene biosynthesis. Its function is as follows. Involved in some intermediate steps for the synthesis of the antibiotic polyketide bacillaene which is involved in secondary metabolism. Catalyzes the decarboxylation of the 3-methylglutaconyl group tethered to PksL to a 3-methylcrotonyl moiety. The chain is Bacillaene synthase decarboxylase PksI (pksI) from Bacillus subtilis (strain 168).